Consider the following 348-residue polypeptide: Hereditary hemochromatosis protein homolog (348 aa).

The signal sequence occupies residues 1 to 22; it reads MGPRARPALFFLILLRTVAAQG. Positions 23–114 are alpha-1; sequence RPPRSHSLRY…IMDNHNHSKE (92 aa). The Extracellular portion of the chain corresponds to 23–306; that stretch reads RPPRSHSLRY…WEPSLSNTLV (284 aa). N110, N130, and N234 each carry an N-linked (GlcNAc...) asparagine glycan. The alpha-2 stretch occupies residues 115 to 205; sequence SHTLQVILGC…ELGRGVLDQQ (91 aa). 2 disulfides stabilise this stretch: C124–C187 and C225–C282. The tract at residues 206-297 is alpha-3; sequence VPPLVKVTHH…GLDQPLTATW (92 aa). The Ig-like C1-type domain occupies 207–296; the sequence is PPLVKVTHHV…PGLDQPLTAT (90 aa). Positions 298-306 are connecting peptide; sequence EPSLSNTLV. Residues 307-330 traverse the membrane as a helical segment; the sequence is TGVISGIAVCVIIFLIGILFRILR. Topologically, residues 331-348 are cytoplasmic; that stretch reads KRQASRGAMGDYVLAECE.

Belongs to the MHC class I family. Binds TFR through the extracellular domain in a pH-dependent manner.

It is found in the cell membrane. In terms of biological role, binds to transferrin receptor (TFR) and reduces its affinity for iron-loaded transferrin. The polypeptide is Hereditary hemochromatosis protein homolog (HFE) (Dicerorhinus sumatrensis (Sumatran rhinoceros)).